Reading from the N-terminus, the 283-residue chain is ATP synthase gamma chain (283 aa).

This sequence belongs to the ATPase gamma chain family. As to quaternary structure, F-type ATPases have 2 components, CF(1) - the catalytic core - and CF(0) - the membrane proton channel. CF(1) has five subunits: alpha(3), beta(3), gamma(1), delta(1), epsilon(1). CF(0) has three main subunits: a, b and c.

It localises to the cell membrane. Functionally, produces ATP from ADP in the presence of a proton gradient across the membrane. The gamma chain is believed to be important in regulating ATPase activity and the flow of protons through the CF(0) complex. The protein is ATP synthase gamma chain of Clostridium kluyveri (strain NBRC 12016).